A 300-amino-acid polypeptide reads, in one-letter code: MLAFIRFLFAGLLLVISHAFAATVQDEHGTFTLEKTPQRIVVLELSFADALAAVDVIPIGIADDNDAKRILPEVRAHLKPWQSVGTRAQPSLEAIAALKPDLIIADSSRHAGVYIALQQIAPVLLLKSRNETYAENLQSAAIIGEMVGKKREMQARLEQHKERMAQWASQLPKGTRVAFGTSREQQFNLHTQETWTGSVLASLGLNVPAAMAGASMPSIGLEQLLAVNPAWLLVAHYREESIVKRWQQDPLWQMLTAAQKQQVASVDSNTWARMRGIFAAERIAADTVKIFHHQPLTVVK.

The N-terminal stretch at 1-21 is a signal peptide; that stretch reads MLAFIRFLFAGLLLVISHAFA. Positions 39–295 constitute a Fe/B12 periplasmic-binding domain; it reads RIVVLELSFA…DTVKIFHHQP (257 aa).

The protein belongs to the bacterial solute-binding protein 8 family. As to quaternary structure, the complex is composed of two ATP-binding proteins (FecE), two transmembrane proteins (FecC and FecD) and a solute-binding protein (FecB). Interacts with FecC and FecD.

The protein resides in the periplasm. Its function is as follows. Part of the ABC transporter complex FecBCDE involved in citrate-dependent Fe(3+) uptake. Binds both iron-free and iron-loaded citrate although it binds iron-loaded citrate with a higher affinity. Binds different forms of Fe(3+)-citrate as well as citrate complexed with various representative Fe(3+)-mimics (Ga(3+), Al(3+), Sc(3+) and In(3+)) and a representative divalent metal ion (Mg(2+)). Can also bind various tricarboxylates in iron-free and iron-loaded form. This is Fe(3+) dicitrate-binding periplasmic protein FecB from Escherichia coli (strain K12).